A 281-amino-acid polypeptide reads, in one-letter code: Clc-like protein 5 (281 aa).

4 helical membrane passes run 13–33 (LATL…TITP), 104–124 (VLIL…AVIF), 137–157 (IMLD…LIVF), and 184–204 (YYLA…AALV).

This sequence belongs to the Clc family.

The protein resides in the membrane. In Caenorhabditis elegans, this protein is Clc-like protein 5 (clc-5).